A 256-amino-acid chain; its full sequence is Na(+)-translocating NADH-quinone reductase subunit E (256 aa).

6 helical membrane-spanning segments follow: residues 1–21, 50–70, 83–103, 123–143, 149–169, and 189–209; these read MWLGAYTWLNVFGILLQAAFI, MSVALVLTVTGSINWFVHAFI, LASVNLGFLELIIFIVVIAAF, GIFLPLIAVNCAILGGVLFGI, FIPMMIFSLGAGCGWWLAIVI, and MGISFITTGLIAMAFMSLTGI. Residues 229–249 show a composition bias toward polar residues; sequence ENTTNPLKESSSKHQPSISKA. Residues 229-256 are disordered; it reads ENTTNPLKESSSKHQPSISKARTQRRSL.

This sequence belongs to the NqrDE/RnfAE family. Composed of six subunits; NqrA, NqrB, NqrC, NqrD, NqrE and NqrF.

The protein localises to the cell inner membrane. It catalyses the reaction a ubiquinone + n Na(+)(in) + NADH + H(+) = a ubiquinol + n Na(+)(out) + NAD(+). NQR complex catalyzes the reduction of ubiquinone-1 to ubiquinol by two successive reactions, coupled with the transport of Na(+) ions from the cytoplasm to the periplasm. NqrA to NqrE are probably involved in the second step, the conversion of ubisemiquinone to ubiquinol. This is Na(+)-translocating NADH-quinone reductase subunit E from Chlamydia pneumoniae (Chlamydophila pneumoniae).